The chain runs to 745 residues: Junction plakoglobin (745 aa).

An N-acetylmethionine modification is found at M1. T14 carries an O-linked (GlcNAc) threonine glycan. Phosphoserine occurs at positions 99 and 125. ARM repeat units follow at residues 132–171, 172–215, 216–255, 258–297, 298–341, 342–381, 383–420, 423–464, 470–510, 512–551, 574–613, and 615–661; these read NYQD…QLSK, KEAS…LSHH, REGL…NLLL, EGAK…LLAY, GNQE…LSVC, PSNK…NLSD, ATKQ…NLTC, SKNK…HLTS, EMAQ…NLAL, PANH…QPYT, PMNR…ELAQ, and KEAA…PDYR. An interaction with DSC1 and DSG1 region spans residues 132-297; it reads NYQDDAELAT…TTDCLQLLAY (166 aa). Position 182 is a phosphoserine (S182). An interaction with DSC1 region spans residues 574 to 661; the sequence is PMNRMEIFRL…ISEDKNPDYR (88 aa). Phosphoserine occurs at positions 665 and 730.

The protein belongs to the beta-catenin family. Homodimer. Component of an E-cadherin/catenin adhesion complex composed of at least E-cadherin/CDH1 and gamma-catenin/JUP, and possibly alpha-catenin/CTNNA1; the complex is located to adherens junctions. The stable association of CTNNA1 is controversial as CTNNA1 was shown not to bind to F-actin when assembled in the complex. Interacts with MUC1. Interacts with CAV1. Interacts with PTPRJ. Interacts with DSG1. Interacts with DSC1 and DSC2. Interacts with PKP2. Interacts with PKP3 (via N-terminus); the interaction is required for PKP3 localization to desmosome cell-cell junctions. Interacts with DSG4. May be phosphorylated by FER. As to expression, expressed in the heart (at protein level).

It is found in the cell junction. The protein localises to the adherens junction. The protein resides in the desmosome. Its subcellular location is the cytoplasm. It localises to the cytoskeleton. It is found in the cell membrane. The protein localises to the nucleus. In terms of biological role, common junctional plaque protein. The membrane-associated plaques are architectural elements in an important strategic position to influence the arrangement and function of both the cytoskeleton and the cells within the tissue. The presence of plakoglobin in both the desmosomes and in the intermediate junctions suggests that it plays a central role in the structure and function of submembranous plaques. Acts as a substrate for VE-PTP and is required by it to stimulate VE-cadherin function in endothelial cells. Can replace beta-catenin in E-cadherin/catenin adhesion complexes which are proposed to couple cadherins to the actin cytoskeleton. The polypeptide is Junction plakoglobin (Homo sapiens (Human)).